The sequence spans 367 residues: 4-hydroxy-3-methylbut-2-en-1-yl diphosphate synthase (flavodoxin) (367 aa).

The [4Fe-4S] cluster site is built by cysteine 265, cysteine 268, cysteine 300, and glutamate 307.

It belongs to the IspG family. The cofactor is [4Fe-4S] cluster.

The catalysed reaction is (2E)-4-hydroxy-3-methylbut-2-enyl diphosphate + oxidized [flavodoxin] + H2O + 2 H(+) = 2-C-methyl-D-erythritol 2,4-cyclic diphosphate + reduced [flavodoxin]. The protein operates within isoprenoid biosynthesis; isopentenyl diphosphate biosynthesis via DXP pathway; isopentenyl diphosphate from 1-deoxy-D-xylulose 5-phosphate: step 5/6. Its function is as follows. Converts 2C-methyl-D-erythritol 2,4-cyclodiphosphate (ME-2,4cPP) into 1-hydroxy-2-methyl-2-(E)-butenyl 4-diphosphate. The chain is 4-hydroxy-3-methylbut-2-en-1-yl diphosphate synthase (flavodoxin) from Bacillus cereus (strain ATCC 10987 / NRS 248).